The chain runs to 61 residues: Small ribosomal subunit protein uS14 (61 aa).

The Zn(2+) site is built by cysteine 24, cysteine 27, cysteine 40, and cysteine 43.

Belongs to the universal ribosomal protein uS14 family. Zinc-binding uS14 subfamily. In terms of assembly, part of the 30S ribosomal subunit. Contacts proteins S3 and S10. Requires Zn(2+) as cofactor.

Functionally, binds 16S rRNA, required for the assembly of 30S particles and may also be responsible for determining the conformation of the 16S rRNA at the A site. This Oleidesulfovibrio alaskensis (strain ATCC BAA-1058 / DSM 17464 / G20) (Desulfovibrio alaskensis) protein is Small ribosomal subunit protein uS14.